A 123-amino-acid polypeptide reads, in one-letter code: UPF0102 protein mma_0204 (123 aa).

It belongs to the UPF0102 family.

The polypeptide is UPF0102 protein mma_0204 (Janthinobacterium sp. (strain Marseille) (Minibacterium massiliensis)).